A 365-amino-acid polypeptide reads, in one-letter code: Histidine biosynthesis bifunctional protein HisB (365 aa).

The segment at Met1–Pro176 is histidinol-phosphatase. Asp10 functions as the Nucleophile in the catalytic mechanism. The Mg(2+) site is built by Asp10 and Asp12. The active-site Proton donor is Asp12. Zn(2+) contacts are provided by Cys93, His95, Cys101, and Cys103. Asp130 contributes to the Mg(2+) binding site. Residues Arg177–Leu365 are imidazoleglycerol-phosphate dehydratase.

In the N-terminal section; belongs to the histidinol-phosphatase family. This sequence in the C-terminal section; belongs to the imidazoleglycerol-phosphate dehydratase family. Mg(2+) is required as a cofactor. Zn(2+) serves as cofactor.

It is found in the cytoplasm. The enzyme catalyses D-erythro-1-(imidazol-4-yl)glycerol 3-phosphate = 3-(imidazol-4-yl)-2-oxopropyl phosphate + H2O. It carries out the reaction L-histidinol phosphate + H2O = L-histidinol + phosphate. It functions in the pathway amino-acid biosynthesis; L-histidine biosynthesis; L-histidine from 5-phospho-alpha-D-ribose 1-diphosphate: step 6/9. The protein operates within amino-acid biosynthesis; L-histidine biosynthesis; L-histidine from 5-phospho-alpha-D-ribose 1-diphosphate: step 8/9. This is Histidine biosynthesis bifunctional protein HisB from Mannheimia succiniciproducens (strain KCTC 0769BP / MBEL55E).